We begin with the raw amino-acid sequence, 459 residues long: Serine permease SerP1 (459 aa).

Helical transmembrane passes span 19 to 39 (IQLI…AGKT), 42 to 62 (MTGP…FFFL), 97 to 117 (SYWL…GTYI), 119 to 139 (FWLP…LLFG), 153 to 173 (FWFA…AIIL), 212 to 232 (FVGA…IGMT), 254 to 274 (ILLF…WHYI), 281 to 301 (FVIV…NFVV), 341 to 361 (AGIP…APVL), 370 to 390 (AFNF…FITL), 412 to 432 (PTIA…SLFF), and 436 to 456 (TFYP…YSHF).

It belongs to the amino acid-polyamine-organocation (APC) superfamily. Amino acid transporter (AAT) (TC 2.A.3.1) family.

The protein localises to the cell membrane. In terms of biological role, transports L-serine, L-threonine and L-cysteine with high affinity. Stereoselective, with a strong preference for L-serine. Is the main L-serine transporter and is responsible for optimal growth in media containing free amino acids as the sole source of amino acids. Is also the main transporter for L-threonine. The sequence is that of Serine permease SerP1 from Lactococcus lactis subsp. cremoris (strain MG1363).